The following is a 117-amino-acid chain: Small ribosomal subunit protein uS12c (117 aa).

A disordered region spans residues 9–40 (RNARQPIENRKKSPALRGCPQRRGTITPKKPN).

The protein belongs to the universal ribosomal protein uS12 family. As to quaternary structure, part of the 30S ribosomal subunit.

The protein resides in the plastid. Its subcellular location is the chloroplast. Its function is as follows. With S4 and S5 plays an important role in translational accuracy. Located at the interface of the 30S and 50S subunits. The polypeptide is Small ribosomal subunit protein uS12c (rps12) (Pinus koraiensis (Korean pine)).